The primary structure comprises 380 residues: Cytochrome b (380 aa).

The next 4 helical transmembrane spans lie at 33 to 53 (FGSL…FLAM), 77 to 98 (WLIR…YLHI), 113 to 133 (WNVG…GYVL), and 178 to 198 (FFAF…IHLL). 2 residues coordinate heme b: His-83 and His-97. Heme b is bound by residues His-182 and His-196. His-201 is a binding site for a ubiquinone. The next 4 helical transmembrane spans lie at 226–246 (YKDL…ALFS), 288–308 (LGGV…PALH), 320–340 (ITQL…WIGG), and 347–367 (FIII…TLIP).

Belongs to the cytochrome b family. As to quaternary structure, the cytochrome bc1 complex contains 3 respiratory subunits (MT-CYB, CYC1 and UQCRFS1), 2 core proteins (UQCRC1 and UQCRC2) and probably 6 low-molecular weight proteins. Heme b serves as cofactor.

The protein resides in the mitochondrion inner membrane. Its function is as follows. Component of the ubiquinol-cytochrome c reductase complex (complex III or cytochrome b-c1 complex) that is part of the mitochondrial respiratory chain. The b-c1 complex mediates electron transfer from ubiquinol to cytochrome c. Contributes to the generation of a proton gradient across the mitochondrial membrane that is then used for ATP synthesis. This chain is Cytochrome b (mt-cyb), found in Percopsis transmontana (Sand roller).